A 32-amino-acid chain; its full sequence is Putative leucine-rich repeat protein PS14 (32 aa).

The protein is Putative leucine-rich repeat protein PS14 of Pinus strobus (Eastern white pine).